Here is a 250-residue protein sequence, read N- to C-terminus: Triosephosphate isomerase (250 aa).

9–11 (NWK) contacts substrate. The Electrophile role is filled by His-94. Residue Glu-165 is the Proton acceptor of the active site. Substrate is bound by residues Gly-171, Ser-211, and 232-233 (GG).

It belongs to the triosephosphate isomerase family. Homodimer.

The protein resides in the cytoplasm. The catalysed reaction is D-glyceraldehyde 3-phosphate = dihydroxyacetone phosphate. It functions in the pathway carbohydrate biosynthesis; gluconeogenesis. The protein operates within carbohydrate degradation; glycolysis; D-glyceraldehyde 3-phosphate from glycerone phosphate: step 1/1. Its function is as follows. Involved in the gluconeogenesis. Catalyzes stereospecifically the conversion of dihydroxyacetone phosphate (DHAP) to D-glyceraldehyde-3-phosphate (G3P). The protein is Triosephosphate isomerase of Alkalilimnicola ehrlichii (strain ATCC BAA-1101 / DSM 17681 / MLHE-1).